Here is a 571-residue protein sequence, read N- to C-terminus: Penicillin-binding protein activator LpoA (571 aa).

The N-terminal stretch at 1 to 26 (MMTILLQHTHLKNRLMPFLLALFLAG) is a signal peptide. A lipid anchor (N-palmitoyl cysteine) is attached at cysteine 27. Cysteine 27 is lipidated: S-diacylglycerol cysteine.

This sequence belongs to the LpoA family. Interacts with PBP1a.

The protein resides in the cell outer membrane. Functionally, regulator of peptidoglycan synthesis that is essential for the function of penicillin-binding protein 1A (PBP1a). In Pasteurella multocida (strain Pm70), this protein is Penicillin-binding protein activator LpoA.